The following is a 456-amino-acid chain: MPDIHIKNTRIYYNNSLQPAEIIIEHGKITKIGKDFRVSSSDMVIDAKGSLTLPAGIDVHVHFREPGMTLKENWYTGSCAAAAGGIATVIDQPNTIPPTTDRRSFEQKLELARKKSIVDFGINGGVTGNIEKLKELWRLGVTAFGEIFMAESTGGLNIKEEDFEEALAEIKRLGALATIHAEDEKMRLELEQLLKGDVSCDYHSKVRPNACEASAVQCALEIISRLGVKAHFCHLSTLEAVGMIRKEKYLAKRENKEPLFTCEVTPHHLFLSTRDWERLGVFGKMNPPLRGSHSIKALVNGLNDGTIDMVASDHAPHLESEKGPDIRAAPSGVPGVETLMPLMLAAVRKNILPLAKMIMLTSWNPARAFGLDLLGKGKLEVSYDADLMIVDPRNLQPVRADMLHSKAGWTPFEGIDAVFPEYTLSRGEVIWMEESINAKPGRGKFLEGKGKMSEED.

H60 and H62 together coordinate Zn(2+). Substrate contacts are provided by residues 62–64 and N94; that span reads HFR. Residues E146, H180, H234, and D313 each contribute to the Zn(2+) site. Residue D313 is part of the active site. H317 provides a ligand contact to substrate.

The protein belongs to the metallo-dependent hydrolases superfamily. DHOase family. Class I DHOase subfamily. It depends on Zn(2+) as a cofactor.

The enzyme catalyses (S)-dihydroorotate + H2O = N-carbamoyl-L-aspartate + H(+). It functions in the pathway pyrimidine metabolism; UMP biosynthesis via de novo pathway; (S)-dihydroorotate from bicarbonate: step 3/3. In terms of biological role, catalyzes the reversible cyclization of carbamoyl aspartate to dihydroorotate. In Methanosarcina mazei (strain ATCC BAA-159 / DSM 3647 / Goe1 / Go1 / JCM 11833 / OCM 88) (Methanosarcina frisia), this protein is Dihydroorotase.